A 420-amino-acid chain; its full sequence is Glutamyl-tRNA reductase (420 aa).

Substrate is bound by residues Thr49–Arg52, Ser107, Glu112–Gln114, and Gln118. Cys50 (nucleophile) is an active-site residue. Residue Gly187 to Ile192 participates in NADP(+) binding.

The protein belongs to the glutamyl-tRNA reductase family. In terms of assembly, homodimer.

It catalyses the reaction (S)-4-amino-5-oxopentanoate + tRNA(Glu) + NADP(+) = L-glutamyl-tRNA(Glu) + NADPH + H(+). Its pathway is porphyrin-containing compound metabolism; protoporphyrin-IX biosynthesis; 5-aminolevulinate from L-glutamyl-tRNA(Glu): step 1/2. Catalyzes the NADPH-dependent reduction of glutamyl-tRNA(Glu) to glutamate 1-semialdehyde (GSA). This is Glutamyl-tRNA reductase from Nitrosococcus oceani (strain ATCC 19707 / BCRC 17464 / JCM 30415 / NCIMB 11848 / C-107).